We begin with the raw amino-acid sequence, 280 residues long: Inner kinetochore subunit fta1 (280 aa).

It belongs to the CENP-L/IML3 family. As to quaternary structure, component of the inner kinetochore constitutive centromere-associated network (CCAN) (also known as central kinetochore Sim4 complex in fission yeast), which is composed of at least cnl2, cnp3, cnp20, fta1, fta2, fta3, fta4, fta6, fta7, mal2, mhf1, mhf2, mis6, mis15, mis17, sim4 and wip1.

The protein resides in the nucleus. It is found in the chromosome. Its subcellular location is the centromere. It localises to the kinetochore. Functionally, component of the kinetochore, a multiprotein complex that assembles on centromeric DNA and attaches chromosomes to spindle microtubules, mediating chromosome segregation and sister chromatid segregation during meiosis and mitosis. Component of the inner kinetochore constitutive centromere-associated network (CCAN), which serves as a structural platform for outer kinetochore assembly. The polypeptide is Inner kinetochore subunit fta1 (fta1) (Schizosaccharomyces pombe (strain 972 / ATCC 24843) (Fission yeast)).